The following is a 145-amino-acid chain: Protein BUD31 homolog 3 (145 aa).

Belongs to the BUD31 (G10) family.

The protein localises to the nucleus. This chain is Protein BUD31 homolog 3, found in Oryza sativa subsp. japonica (Rice).